Reading from the N-terminus, the 1148-residue chain is Putative ATP-dependent RNA helicase rha-2 (1148 aa).

The segment covering 1–10 (MGKRKTKEDN) has biased composition (basic and acidic residues). 2 disordered regions span residues 1 to 51 (MGKR…FAKE) and 101 to 163 (STKL…DAGN). The segment covering 138 to 160 (PTDDESSSEEEEEEEEGDNDIED) has biased composition (acidic residues). The Helicase ATP-binding domain maps to 246 to 412 (VEAINENLVT…KLFPLLTPKV (167 aa)). 259–266 (GETGSGKT) contacts ATP. Positions 355–358 (DEAH) match the DEAH box motif. Positions 463 to 703 (EVKQLITKLK…QLVLHLKSMN (241 aa)) constitute a Helicase C-terminal domain.

The protein belongs to the DEAD box helicase family. DEAH subfamily.

It carries out the reaction ATP + H2O = ADP + phosphate + H(+). In terms of biological role, probable ATP-binding RNA helicase. In Caenorhabditis elegans, this protein is Putative ATP-dependent RNA helicase rha-2 (rha-2).